The chain runs to 428 residues: Adenylosuccinate synthetase (428 aa).

Residues 12 to 18 (GDEGKGK) and 40 to 42 (GHT) contribute to the GTP site. Asp-13 functions as the Proton acceptor in the catalytic mechanism. 2 residues coordinate Mg(2+): Asp-13 and Gly-40. IMP contacts are provided by residues 13 to 16 (DEGK), 38 to 41 (NAGH), Thr-129, Arg-143, Gln-224, Thr-239, and Arg-303. His-41 (proton donor) is an active-site residue. A substrate-binding site is contributed by 299-305 (VTTGRIR). GTP is bound by residues Arg-305, 331–333 (KVD), and 410–412 (AYG).

It belongs to the adenylosuccinate synthetase family. Homodimer. It depends on Mg(2+) as a cofactor.

It is found in the cytoplasm. It carries out the reaction IMP + L-aspartate + GTP = N(6)-(1,2-dicarboxyethyl)-AMP + GDP + phosphate + 2 H(+). Its pathway is purine metabolism; AMP biosynthesis via de novo pathway; AMP from IMP: step 1/2. Functionally, plays an important role in the de novo pathway of purine nucleotide biosynthesis. Catalyzes the first committed step in the biosynthesis of AMP from IMP. The sequence is that of Adenylosuccinate synthetase from Francisella tularensis subsp. mediasiatica (strain FSC147).